A 382-amino-acid chain; its full sequence is Lipoyl synthase, mitochondrial (382 aa).

Residues 1–30 (MHGRRHLAASLARALTYAPSRSISSTPSLL) constitute a mitochondrion transit peptide. Over residues 25-34 (STPSLLQTLD) the composition is skewed to polar residues. The tract at residues 25–46 (STPSLLQTLDPSTPSPAAAPPT) is disordered. 7 residues coordinate [4Fe-4S] cluster: Cys-112, Cys-117, Cys-123, Cys-143, Cys-147, Cys-150, and Ser-359. One can recognise a Radical SAM core domain in the interval 128 to 348 (ETGTATATIM…RSLGVDMGFR (221 aa)).

It belongs to the radical SAM superfamily. Lipoyl synthase family. It depends on [4Fe-4S] cluster as a cofactor.

It is found in the mitochondrion. It catalyses the reaction [[Fe-S] cluster scaffold protein carrying a second [4Fe-4S](2+) cluster] + N(6)-octanoyl-L-lysyl-[protein] + 2 oxidized [2Fe-2S]-[ferredoxin] + 2 S-adenosyl-L-methionine + 4 H(+) = [[Fe-S] cluster scaffold protein] + N(6)-[(R)-dihydrolipoyl]-L-lysyl-[protein] + 4 Fe(3+) + 2 hydrogen sulfide + 2 5'-deoxyadenosine + 2 L-methionine + 2 reduced [2Fe-2S]-[ferredoxin]. It participates in protein modification; protein lipoylation via endogenous pathway; protein N(6)-(lipoyl)lysine from octanoyl-[acyl-carrier-protein]: step 2/2. Functionally, catalyzes the radical-mediated insertion of two sulfur atoms into the C-6 and C-8 positions of the octanoyl moiety bound to the lipoyl domains of lipoate-dependent enzymes, thereby converting the octanoylated domains into lipoylated derivatives. The polypeptide is Lipoyl synthase, mitochondrial (Oryza sativa subsp. japonica (Rice)).